Consider the following 383-residue polypeptide: MKNKLPPFIEIYRALIATPSISATEEALDQSNADLITLLADWFKDLGFNVEVQPVPGTRNKFNMLASTGQGAGGLLLAGHTDTVPFDDGRWTRDPFTLTEHDGKLYGLGTADMKGFFAFILDALRDVDVTKLKKPLYILATADEETSMAGARYFAETTALRPDCAIIGEPTSLQPVRAHKGHISNAIRIQGQSGHSSDPARGVNAIELMHDAIGHILQLRDNLKERYHYEAFTVPYPTLNLGHIHGGDASNRICAWCELHMDIRPLPGMTLNELNGLLNDALAPVSERWPGRLTVDELHPPIPGYECPPNHQLVEVVEKLLGAKTEVVNYCTEAPFIQTLCPTLVLGPGSINQAHQPDEYLETRFIKPTRELITQVIHHFCWH.

H80 serves as a coordination point for Zn(2+). Residue D82 is part of the active site. D112 lines the Zn(2+) pocket. The active site involves E144. 3 residues coordinate Zn(2+): E145, E169, and H355.

Belongs to the peptidase M20A family. ArgE subfamily. Homodimer. Zn(2+) is required as a cofactor. Co(2+) serves as cofactor. It depends on glutathione as a cofactor.

The protein localises to the cytoplasm. The catalysed reaction is N(2)-acetyl-L-ornithine + H2O = L-ornithine + acetate. It participates in amino-acid biosynthesis; L-arginine biosynthesis; L-ornithine from N(2)-acetyl-L-ornithine (linear): step 1/1. In terms of biological role, catalyzes the hydrolysis of the amide bond of N(2)-acetylated L-amino acids. Cleaves the acetyl group from N-acetyl-L-ornithine to form L-ornithine, an intermediate in L-arginine biosynthesis pathway, and a branchpoint in the synthesis of polyamines. The polypeptide is Acetylornithine deacetylase (Escherichia coli O157:H7).